Reading from the N-terminus, the 957-residue chain is Glycine dehydrogenase (decarboxylating) (957 aa).

Position 708 is an N6-(pyridoxal phosphate)lysine (Lys708).

The protein belongs to the GcvP family. In terms of assembly, the glycine cleavage system is composed of four proteins: P, T, L and H. The cofactor is pyridoxal 5'-phosphate.

It carries out the reaction N(6)-[(R)-lipoyl]-L-lysyl-[glycine-cleavage complex H protein] + glycine + H(+) = N(6)-[(R)-S(8)-aminomethyldihydrolipoyl]-L-lysyl-[glycine-cleavage complex H protein] + CO2. Functionally, the glycine cleavage system catalyzes the degradation of glycine. The P protein binds the alpha-amino group of glycine through its pyridoxal phosphate cofactor; CO(2) is released and the remaining methylamine moiety is then transferred to the lipoamide cofactor of the H protein. In Salmonella newport (strain SL254), this protein is Glycine dehydrogenase (decarboxylating).